A 92-amino-acid chain; its full sequence is Small ribosomal subunit protein uS19 (92 aa).

Belongs to the universal ribosomal protein uS19 family.

In terms of biological role, protein S19 forms a complex with S13 that binds strongly to the 16S ribosomal RNA. The polypeptide is Small ribosomal subunit protein uS19 (Exiguobacterium sibiricum (strain DSM 17290 / CCUG 55495 / CIP 109462 / JCM 13490 / 255-15)).